A 213-amino-acid polypeptide reads, in one-letter code: Protein GrpE (213 aa).

A compositionally biased stretch (basic and acidic residues) spans 1-23 (MSDEKKPEAETSESLQKREEKLA). Residues 1–43 (MSDEKKPEAETSESLQKREEKLAETLASEPAAQGEAEDAAAAG) form a disordered region. The span at 29–43 (EPAAQGEAEDAAAAG) shows a compositional bias: low complexity.

It belongs to the GrpE family. Homodimer.

It is found in the cytoplasm. In terms of biological role, participates actively in the response to hyperosmotic and heat shock by preventing the aggregation of stress-denatured proteins, in association with DnaK and GrpE. It is the nucleotide exchange factor for DnaK and may function as a thermosensor. Unfolded proteins bind initially to DnaJ; upon interaction with the DnaJ-bound protein, DnaK hydrolyzes its bound ATP, resulting in the formation of a stable complex. GrpE releases ADP from DnaK; ATP binding to DnaK triggers the release of the substrate protein, thus completing the reaction cycle. Several rounds of ATP-dependent interactions between DnaJ, DnaK and GrpE are required for fully efficient folding. The sequence is that of Protein GrpE from Parvibaculum lavamentivorans (strain DS-1 / DSM 13023 / NCIMB 13966).